Here is a 400-residue protein sequence, read N- to C-terminus: Ribose-phosphate pyrophosphokinase 2, chloroplastic (400 aa).

The N-terminal 44 residues, 1–44 (MASLALTSPPSVKIPSYLSSSSSSLFSRSSISFRTTESRSRICV), are a transit peptide targeting the chloroplast. Aspartate 214, histidine 216, aspartate 225, and aspartate 229 together coordinate Mg(2+). The segment at 300-315 (GKVAVMVDDIIDTAGT) is binding of phosphoribosylpyrophosphate.

Belongs to the ribose-phosphate pyrophosphokinase family.

The protein resides in the plastid. It is found in the chloroplast. The catalysed reaction is D-ribose 5-phosphate + ATP = 5-phospho-alpha-D-ribose 1-diphosphate + AMP + H(+). In Arabidopsis thaliana (Mouse-ear cress), this protein is Ribose-phosphate pyrophosphokinase 2, chloroplastic (PRS2).